The chain runs to 398 residues: Succinyl-diaminopimelate desuccinylase (398 aa).

Position 68 (His-68) interacts with Zn(2+). Asp-70 is a catalytic residue. Asp-101 provides a ligand contact to Zn(2+). Residue Glu-135 is the Proton acceptor of the active site. 3 residues coordinate Zn(2+): Glu-136, Glu-164, and His-349.

Belongs to the peptidase M20A family. DapE subfamily. Homodimer. Zn(2+) serves as cofactor. The cofactor is Co(2+).

The enzyme catalyses N-succinyl-(2S,6S)-2,6-diaminopimelate + H2O = (2S,6S)-2,6-diaminopimelate + succinate. It participates in amino-acid biosynthesis; L-lysine biosynthesis via DAP pathway; LL-2,6-diaminopimelate from (S)-tetrahydrodipicolinate (succinylase route): step 3/3. Its function is as follows. Catalyzes the hydrolysis of N-succinyl-L,L-diaminopimelic acid (SDAP), forming succinate and LL-2,6-diaminopimelate (DAP), an intermediate involved in the bacterial biosynthesis of lysine and meso-diaminopimelic acid, an essential component of bacterial cell walls. The protein is Succinyl-diaminopimelate desuccinylase of Wolbachia pipientis subsp. Culex pipiens (strain wPip).